The chain runs to 118 residues: Large ribosomal subunit protein bL20 (118 aa).

It belongs to the bacterial ribosomal protein bL20 family.

Its function is as follows. Binds directly to 23S ribosomal RNA and is necessary for the in vitro assembly process of the 50S ribosomal subunit. It is not involved in the protein synthesizing functions of that subunit. In Francisella tularensis subsp. holarctica (strain FTNF002-00 / FTA), this protein is Large ribosomal subunit protein bL20.